The sequence spans 688 residues: MELQTLQEALKVEIQVHQKLVAQMKQDPQNADLKKQLHELQAKITALSEKQKRVVEQLRKNLIVKQEQPDKFQIQPLSQSENKLQTAQQQPLQPLQQQQPQQPQQQQQQQQQHAQQSAAAPPSLTASQKTVTTASMITTKTLPLVLKAATATMPASVVGQRPTIAMVTAINSQKAVLSTDVQNTPVNLQTSSKVTGPGAEAVQIVAKNTVTLQVQATPPQPIKVPQFIPPPRLTPRPNFLPQVRPKPVAQNNIPIAPAPPPMLAAPQLIQRPVMLTKFTPTTLPTSQNSIHPVRVVNGQTATIAKTFPMAQLTSIVIATPGTRLAGPQTVQLSKPSLEKQTVKSHPEAEEKQAESRTVTPPAAPKPKREENPQKLAFMVSLGLVTHDHLEEIQSKRQERKRRTTANPVYSGAVFEPERKKSAVTYLNSTMHPGTRKRGRPPKYNAVLGFGALTPTSPPSSHPDSPENEKTETTFTFPAPVQPVSLPSPTSTDGDIHEDFCSVCRKSGQLLMCDTCSRVYHLDCLEPPLKTIPKGMWICPRCQDQMLKKEEAIPWPGTLAIVHSYIAYKAAKEEEKQKLLKWSSDLKQEREQLEQKVKELSSSISKCMEMKSSILARQKEMRSSLDKVKRLIRLVHGVDLCRPVDSEATAGALSNGPDCTPPANAASTPAPSPSSQSCTANCNQGEETK.

Lys65 is covalently cross-linked (Glycyl lysine isopeptide (Lys-Gly) (interchain with G-Cter in SUMO2)). Disordered regions lie at residues 78 to 127 and 327 to 373; these read SQSE…LTAS and PQTV…ENPQ. The segment covering 85–127 has biased composition (low complexity); the sequence is QTAQQQPLQPLQQQQPQQPQQQQQQQQQHAQQSAAAPPSLTAS. Basic and acidic residues predominate over residues 336–354; the sequence is SLEKQTVKSHPEAEEKQAE. Residues 434 to 446 constitute a DNA-binding region (a.T hook); that stretch reads TRKRGRPPKYNAV. The segment at 449 to 471 is disordered; that stretch reads FGALTPTSPPSSHPDSPENEKTE. Phosphothreonine is present on Thr453. Residue Ser456 is modified to Phosphoserine. A PHD-type zinc finger spans residues 497-544; sequence EDFCSVCRKSGQLLMCDTCSRVYHLDCLEPPLKTIPKGMWICPRCQDQ. Positions 571 to 609 form a coiled coil; the sequence is KEEEKQKLLKWSSDLKQEREQLEQKVKELSSSISKCMEM. Residues 650-688 are disordered; that stretch reads GALSNGPDCTPPANAASTPAPSPSSQSCTANCNQGEETK. Residues 660–679 show a composition bias toward low complexity; the sequence is PPANAASTPAPSPSSQSCTA.

In terms of assembly, component of a BHC histone deacetylase complex that contains HDAC1, HDAC2, HMG20B/BRAF35, KDM1A, RCOR1/CoREST and PHF21A/BHC80. The BHC complex may also contain ZMYM2, ZNF217, ZMYM3, GSE1 and GTF2I. In the complex, it interacts directly with HDAC1, HDAC2, HMG20B/BRAF35, KDM1A and RCOR1/CoREST. Expressed in the brain and testis. Weakly or not expressed in other tissues tested. Localized throughout the central nervous system (CNS) in brain, including the cerebellum, hippocampus, and cortex. Notably present in neuronal cells of granular cell layer and dentate gyrus in cerebellum and hippocampus, respectively. In the seminiferous tubules, the signals it is present strongly in spermatocytes, and weakly in spermatogonia and round spermatids. In some cases, it is also observed solely in spermatocytes (at protein level).

The protein localises to the nucleus. Functionally, component of the BHC complex, a corepressor complex that represses transcription of neuron-specific genes in non-neuronal cells. The BHC complex is recruited at RE1/NRSE sites by REST and acts by deacetylating and demethylating specific sites on histones, thereby acting as a chromatin modifier. In the BHC complex, it may act as a scaffold. Inhibits KDM1A-mediated demethylation of 'Lys-4' of histone H3 in vitro, suggesting a role in demethylation regulation. The sequence is that of PHD finger protein 21A from Mus musculus (Mouse).